Here is a 405-residue protein sequence, read N- to C-terminus: CMP-sialic acid transporter 4 (405 aa).

At 1 to 43 (MQRNGVMECSVCHSKVVAPSPRSVSRAYDKHRSKISSKYRALN) the chain is on the cytoplasmic side. A helical transmembrane segment spans residues 44-64 (FLLVSGDCILVGLQPILVFMS). The Lumenal portion of the chain corresponds to 65-74 (KVDGKFQFSP). A helical membrane pass occupies residues 75–95 (ISVNFLTEVTKVIFAIVMLII). Over 96-121 (QSRKQKVGEKPLLSLSTFVQAARNNA) the chain is Cytoplasmic. A helical membrane pass occupies residues 122-142 (LLAVPALLYAINNYLKFIMQL). Tyr143 is a topological domain (lumenal). A helical transmembrane segment spans residues 144–164 (FSPATVKMLSNLKVLVIAILL). The Cytoplasmic portion of the chain corresponds to 165-171 (KFIMRRK). The chain crosses the membrane as a helical span at residues 172 to 192 (FSIIQWEALALLLIGISVNQL). The Lumenal portion of the chain corresponds to 193 to 203 (SSIPDGTKSFG). Residues 204–224 (LAVTTIAYIYTLIFVTVPSLA) traverse the membrane as a helical segment. The Cytoplasmic segment spans residues 225 to 244 (SVYNEYALKSQFDTSIYLQN). A helical transmembrane segment spans residues 245 to 265 (LFLYGYGAIFNFLGILGTVIF). The Lumenal portion of the chain corresponds to 266-281 (QGPESFDILRGHSRAT). The helical transmembrane segment at 282 to 302 (MFLICNNAAQGILSSFFFKYA) threads the bilayer. At 303-322 (DTILKKYSSTVATIFTGLAS) the chain is on the cytoplasmic side. Residues 323 to 343 (AAFLGHTLTVNFLLGISIVFI) traverse the membrane as a helical segment. Topologically, residues 344 to 405 (SMHQFFSPLA…TDERKPLLPI (62 aa)) are lumenal.

It belongs to the nucleotide-sugar transporter family. CMP-Sialate:CMP antiporter (TC 2.A.7.12) subfamily.

The protein resides in the golgi apparatus membrane. Sugar transporter involved in the transport of CMP-sialic acid from the cytoplasm into the Golgi. May transport important nucleotide sugars such as CMP-Kdo (2-keto-3-deoxy-D-manno-octulosonic acid) in physiological conditions. This Oryza sativa subsp. japonica (Rice) protein is CMP-sialic acid transporter 4.